The sequence spans 293 residues: MRHPDFPSQLAMTSAWHASLRLRFAARAGRTAMVERRHEGPLRVQKPLYPEGEICHGVVLHPPAGVAGGDRLDIDIAVASGAHAVLATPGATKWYKSLGRDAAQHVRIEVAAGGKLDWLPQENIVFDDARARITTDVVVAPGGSAIGWDAVVLGRQASGERWASGALWLDTRVGDPDRALWIEQSHFDGASPLRGAVAGMDGLHILGTLWAIGPGATQELAEALAEHLPYRADLRAGVTCLAGYGTATAQSMLLLRVLGSDMEAVRHLMIDAWTVLRQPMHGVPARPLRLWST.

It belongs to the UreD family. As to quaternary structure, ureD, UreF and UreG form a complex that acts as a GTP-hydrolysis-dependent molecular chaperone, activating the urease apoprotein by helping to assemble the nickel containing metallocenter of UreC. The UreE protein probably delivers the nickel.

The protein localises to the cytoplasm. Functionally, required for maturation of urease via the functional incorporation of the urease nickel metallocenter. This chain is Urease accessory protein UreD, found in Cupriavidus metallidurans (strain ATCC 43123 / DSM 2839 / NBRC 102507 / CH34) (Ralstonia metallidurans).